The primary structure comprises 401 residues: Argininosuccinate synthase (401 aa).

ATP is bound by residues 10 to 18 (AYSGGVDTS) and Ala38. Tyr89 lines the L-citrulline pocket. Gly119 serves as a coordination point for ATP. Residues Thr121, Asn125, and Asp126 each coordinate L-aspartate. Asn125 is a binding site for L-citrulline. Positions 129, 177, 186, 262, and 274 each coordinate L-citrulline.

Belongs to the argininosuccinate synthase family. Type 1 subfamily. As to quaternary structure, homotetramer.

Its subcellular location is the cytoplasm. The catalysed reaction is L-citrulline + L-aspartate + ATP = 2-(N(omega)-L-arginino)succinate + AMP + diphosphate + H(+). It participates in amino-acid biosynthesis; L-arginine biosynthesis; L-arginine from L-ornithine and carbamoyl phosphate: step 2/3. The polypeptide is Argininosuccinate synthase (Prochlorococcus marinus (strain MIT 9313)).